A 567-amino-acid chain; its full sequence is Proline--tRNA ligase (567 aa).

This sequence belongs to the class-II aminoacyl-tRNA synthetase family. ProS type 1 subfamily. As to quaternary structure, homodimer.

The protein resides in the cytoplasm. The catalysed reaction is tRNA(Pro) + L-proline + ATP = L-prolyl-tRNA(Pro) + AMP + diphosphate. Its function is as follows. Catalyzes the attachment of proline to tRNA(Pro) in a two-step reaction: proline is first activated by ATP to form Pro-AMP and then transferred to the acceptor end of tRNA(Pro). As ProRS can inadvertently accommodate and process non-cognate amino acids such as alanine and cysteine, to avoid such errors it has two additional distinct editing activities against alanine. One activity is designated as 'pretransfer' editing and involves the tRNA(Pro)-independent hydrolysis of activated Ala-AMP. The other activity is designated 'posttransfer' editing and involves deacylation of mischarged Ala-tRNA(Pro). The misacylated Cys-tRNA(Pro) is not edited by ProRS. The chain is Proline--tRNA ligase from Streptomyces griseus subsp. griseus (strain JCM 4626 / CBS 651.72 / NBRC 13350 / KCC S-0626 / ISP 5235).